Reading from the N-terminus, the 335-residue chain is Glyceraldehyde-3-phosphate dehydrogenase 1 (335 aa).

NAD(+)-binding positions include 12–13 (RI), D34, R78, and S120. D-glyceraldehyde 3-phosphate is bound by residues 151–153 (SCT) and T182. Residue C152 is the Nucleophile of the active site. NAD(+) is bound at residue N183. Residues R197, 210 to 211 (TG), and R233 contribute to the D-glyceraldehyde 3-phosphate site. N315 provides a ligand contact to NAD(+).

It belongs to the glyceraldehyde-3-phosphate dehydrogenase family. Homotetramer. Interacts with BrxC. In terms of processing, in response to oxidative stress, the active site Cys likely reacts with bacillithiol (BSH) to form mixed disulfides to protect the Cys residue against overoxidation. S-bacillithiolation presumably leads to loss of catalytic activity. Debacillithiolation by monothiol bacilliredoxin BrxC restores the activity.

The protein resides in the cytoplasm. The enzyme catalyses D-glyceraldehyde 3-phosphate + phosphate + NAD(+) = (2R)-3-phospho-glyceroyl phosphate + NADH + H(+). It participates in carbohydrate degradation; glycolysis; pyruvate from D-glyceraldehyde 3-phosphate: step 1/5. In terms of biological role, involved in the glycolysis. Catalyzes the oxidative phosphorylation of glyceraldehyde 3-phosphate (G3P) to 1,3-bisphosphoglycerate (BPG) using the cofactor NAD. The first reaction step involves the formation of a hemiacetal intermediate between G3P and a cysteine residue, and this hemiacetal intermediate is then oxidized to a thioester, with concomitant reduction of NAD to NADH. The reduced NADH is then exchanged with the second NAD, and the thioester is attacked by a nucleophilic inorganic phosphate to produce BPG. In Bacillus subtilis (strain 168), this protein is Glyceraldehyde-3-phosphate dehydrogenase 1.